Consider the following 388-residue polypeptide: Lipid-A-disaccharide synthase (388 aa).

The protein belongs to the LpxB family.

The catalysed reaction is a lipid X + a UDP-2-N,3-O-bis[(3R)-3-hydroxyacyl]-alpha-D-glucosamine = a lipid A disaccharide + UDP + H(+). Its pathway is bacterial outer membrane biogenesis; LPS lipid A biosynthesis. In terms of biological role, condensation of UDP-2,3-diacylglucosamine and 2,3-diacylglucosamine-1-phosphate to form lipid A disaccharide, a precursor of lipid A, a phosphorylated glycolipid that anchors the lipopolysaccharide to the outer membrane of the cell. The chain is Lipid-A-disaccharide synthase from Sulfurihydrogenibium sp. (strain YO3AOP1).